A 377-amino-acid polypeptide reads, in one-letter code: Succinyl-diaminopimelate desuccinylase (377 aa).

Histidine 67 is a binding site for Zn(2+). Aspartate 69 is a catalytic residue. Aspartate 100 contributes to the Zn(2+) binding site. Catalysis depends on glutamate 134, which acts as the Proton acceptor. Residues glutamate 135, glutamate 163, and histidine 349 each contribute to the Zn(2+) site.

Belongs to the peptidase M20A family. DapE subfamily. As to quaternary structure, homodimer. It depends on Zn(2+) as a cofactor. Requires Co(2+) as cofactor.

The enzyme catalyses N-succinyl-(2S,6S)-2,6-diaminopimelate + H2O = (2S,6S)-2,6-diaminopimelate + succinate. It functions in the pathway amino-acid biosynthesis; L-lysine biosynthesis via DAP pathway; LL-2,6-diaminopimelate from (S)-tetrahydrodipicolinate (succinylase route): step 3/3. Functionally, catalyzes the hydrolysis of N-succinyl-L,L-diaminopimelic acid (SDAP), forming succinate and LL-2,6-diaminopimelate (DAP), an intermediate involved in the bacterial biosynthesis of lysine and meso-diaminopimelic acid, an essential component of bacterial cell walls. The protein is Succinyl-diaminopimelate desuccinylase of Buchnera aphidicola subsp. Baizongia pistaciae (strain Bp).